Here is a 163-residue protein sequence, read N- to C-terminus: Meiotically up-regulated gene 109 protein (163 aa).

The next 4 membrane-spanning stretches (helical) occupy residues 61–78 (YRFYGTLLCICWLYFFIW), 82–104 (ALLALMVGVFLSFVMHGLGSLTI), 114–134 (YSIPGVCAVTLIVIMFLAPVG), and 136–156 (LFWSFCIVSSFAGLHCLLTTY).

It is found in the membrane. Its function is as follows. Has a role in meiosis. The chain is Meiotically up-regulated gene 109 protein (mug109) from Schizosaccharomyces pombe (strain 972 / ATCC 24843) (Fission yeast).